The primary structure comprises 578 residues: Galectin-3-binding protein (578 aa).

The first 18 residues, 1-18 (MAFLWLFSLWLLVPGTQG), serve as a signal peptide directing secretion. One can recognise an SRCR domain in the interval 24–124 (MRLVNGASAN…HEKDAGVVCS (101 aa)). Disulfide bonds link C49-C113, C62-C123, and C93-C103. N69 and N102 each carry an N-linked (GlcNAc...) asparagine glycan. One can recognise a BTB domain in the interval 153–221 (CDLFIQVTGQ…FYSRRIEVTM (69 aa)). A BACK domain is found at 260-360 (PLELYAYAQA…VLPQELFELQ (101 aa)). N-linked (GlcNAc...) asparagine glycosylation is found at N362 and N398.

Homodimers and homomultimers. The multimers form ring-like structures with a diameter of 30-40 nm. Binds LGALS1 and LGALS3. Binds ITGB1, COL4A1, COL5A1, COL6A1, FN1 and NID. The unglycosylated form interacts with PDE4DIP; this interaction, which is PDE4DIP isoform-specific, may connect a pericentrosomal complex to the gamma-tubulin ring complex (gamma-TuRC) to promote microtubule assembly and acetylation.

Its subcellular location is the secreted. The protein localises to the extracellular space. The protein resides in the extracellular matrix. In terms of biological role, promotes integrin-mediated cell adhesion. May stimulate host defense against viruses and tumor cells. The polypeptide is Galectin-3-binding protein (LGALS3BP) (Mesocricetus auratus (Golden hamster)).